A 398-amino-acid chain; its full sequence is Cytohesin-1 (398 aa).

N-acetylmethionine is present on Met1. The interval 1 to 60 is necessary for localization at adherens junction; it reads MEDDDSYVPSDLTAEERQELENIRRRKQELLADIQRLKEEIAEVANEIESLGSTEERKNM. A coiled-coil region spans residues 10–67; the sequence is SDLTAEERQELENIRRRKQELLADIQRLKEEIAEVANEIESLGSTEERKNMQRNKQVA. Residues 73–202 enclose the SEC7 domain; the sequence is FNMDPKKGIQ…IIMLNTSLHN (130 aa). The 118-residue stretch at 260 to 377 folds into the PH domain; that stretch reads NPDREGWLLK…WIKCIKAAIS (118 aa). Residues 269 to 277, Arg281, Tyr292, Arg302, and Asn351 each bind a 1,2-diacyl-sn-glycero-3-phospho-(1D-myo-inositol-3,4,5-trisphosphate); that span reads KLGGGRVKT. The tract at residues 388–396 is C-terminal autoinhibitory region; the sequence is RKKKVSSTK.

As to quaternary structure, interacts with TRIM23 and CYTIP. Interacts (via coiled-coil domain) with FRMD4A (via coiled-coil domain). Interacts with FRMD4B. Found in a complex with PARD3, CYTH1 and FRMD4A. Interacts (via N-terminal domain) with INAVA (via N-terminal domain). Post-translationally, ubiquitinated by SCF(FBXW11) E3 ubiquitin-protein ligase complex. Ubiquitination induces proteasomal degradation. Expressed in colon and small intestine (at protein level).

The protein localises to the cell membrane. It is found in the cytoplasm. It localises to the cytosol. Its subcellular location is the cell junction. The protein resides in the tight junction. The protein localises to the adherens junction. In terms of biological role, promotes guanine-nucleotide exchange on ARF1, ARF5 and ARF6. Promotes the activation of ARF factors through replacement of GDP with GTP. Plays an important role in membrane trafficking, during junctional remodeling and epithelial polarization, through regulation of ARF6 activity. This Mus musculus (Mouse) protein is Cytohesin-1 (Cyth1).